The primary structure comprises 294 residues: Nucleotide-binding protein Dtur_1129 (294 aa).

10 to 17 lines the ATP pocket; the sequence is GLSGAGKS. Residue 61-64 coordinates GTP; it reads DIRT.

The protein belongs to the RapZ-like family.

In terms of biological role, displays ATPase and GTPase activities. The protein is Nucleotide-binding protein Dtur_1129 of Dictyoglomus turgidum (strain DSM 6724 / Z-1310).